The primary structure comprises 260 residues: Proteasome subunit alpha (260 aa).

A disordered region spans residues 241 to 260 (VEAEEVPEKEEDYSELDSNY). Residues 242-260 (EAEEVPEKEEDYSELDSNY) show a composition bias toward acidic residues.

It belongs to the peptidase T1A family. As to quaternary structure, the 20S proteasome core is composed of 14 alpha and 14 beta subunits that assemble into four stacked heptameric rings, resulting in a barrel-shaped structure. The two inner rings, each composed of seven catalytic beta subunits, are sandwiched by two outer rings, each composed of seven alpha subunits. The catalytic chamber with the active sites is on the inside of the barrel. Has a gated structure, the ends of the cylinder being occluded by the N-termini of the alpha-subunits. Is capped at one or both ends by the proteasome regulatory ATPase, PAN.

Its subcellular location is the cytoplasm. With respect to regulation, the formation of the proteasomal ATPase PAN-20S proteasome complex, via the docking of the C-termini of PAN into the intersubunit pockets in the alpha-rings, triggers opening of the gate for substrate entry. Interconversion between the open-gate and close-gate conformations leads to a dynamic regulation of the 20S proteasome proteolysis activity. Component of the proteasome core, a large protease complex with broad specificity involved in protein degradation. This is Proteasome subunit alpha from Thermococcus sibiricus (strain DSM 12597 / MM 739).